Reading from the N-terminus, the 62-residue chain is Large ribosomal subunit protein bL28 (62 aa).

A disordered region spans residues 1–28; sequence MARVCAITGRKARSGNSRSHAMNATKRK.

It belongs to the bacterial ribosomal protein bL28 family.

This is Large ribosomal subunit protein bL28 from Bacillus thuringiensis (strain Al Hakam).